Here is a 467-residue protein sequence, read N- to C-terminus: Uronate isomerase (467 aa).

The protein belongs to the metallo-dependent hydrolases superfamily. Uronate isomerase family.

The enzyme catalyses D-glucuronate = D-fructuronate. The catalysed reaction is aldehydo-D-galacturonate = keto-D-tagaturonate. It participates in carbohydrate metabolism; pentose and glucuronate interconversion. This Haemophilus influenzae (strain PittGG) protein is Uronate isomerase.